The following is a 145-amino-acid chain: D-aminoacyl-tRNA deacylase (145 aa).

Positions 137-138 (GP) match the Gly-cisPro motif, important for rejection of L-amino acids motif.

This sequence belongs to the DTD family. In terms of assembly, homodimer.

It localises to the cytoplasm. The enzyme catalyses glycyl-tRNA(Ala) + H2O = tRNA(Ala) + glycine + H(+). It carries out the reaction a D-aminoacyl-tRNA + H2O = a tRNA + a D-alpha-amino acid + H(+). Its function is as follows. An aminoacyl-tRNA editing enzyme that deacylates mischarged D-aminoacyl-tRNAs. Also deacylates mischarged glycyl-tRNA(Ala), protecting cells against glycine mischarging by AlaRS. Acts via tRNA-based rather than protein-based catalysis; rejects L-amino acids rather than detecting D-amino acids in the active site. By recycling D-aminoacyl-tRNA to D-amino acids and free tRNA molecules, this enzyme counteracts the toxicity associated with the formation of D-aminoacyl-tRNA entities in vivo and helps enforce protein L-homochirality. The sequence is that of D-aminoacyl-tRNA deacylase from Salmonella paratyphi A (strain AKU_12601).